A 163-amino-acid chain; its full sequence is SsrA-binding protein (163 aa).

Basic and acidic residues predominate over residues 140-157; sequence RRGAIAERESKREMDRAL. A disordered region spans residues 140 to 163; the sequence is RRGAIAERESKREMDRALARGRRR.

This sequence belongs to the SmpB family.

It is found in the cytoplasm. Required for rescue of stalled ribosomes mediated by trans-translation. Binds to transfer-messenger RNA (tmRNA), required for stable association of tmRNA with ribosomes. tmRNA and SmpB together mimic tRNA shape, replacing the anticodon stem-loop with SmpB. tmRNA is encoded by the ssrA gene; the 2 termini fold to resemble tRNA(Ala) and it encodes a 'tag peptide', a short internal open reading frame. During trans-translation Ala-aminoacylated tmRNA acts like a tRNA, entering the A-site of stalled ribosomes, displacing the stalled mRNA. The ribosome then switches to translate the ORF on the tmRNA; the nascent peptide is terminated with the 'tag peptide' encoded by the tmRNA and targeted for degradation. The ribosome is freed to recommence translation, which seems to be the essential function of trans-translation. The chain is SsrA-binding protein from Anaeromyxobacter dehalogenans (strain 2CP-C).